Consider the following 151-residue polypeptide: uncharacterized protein (151 aa).

The next 3 helical transmembrane spans lie at 12 to 32 (LAYFIDGIIVSVPSYIILFII), 59 to 79 (LAFLPTMLIMIVISVLYYGLL), and 114 to 134 (YFAYILSGIIFYIGFIMIAFG).

Its subcellular location is the cell membrane. This is an uncharacterized protein from Bacillus subtilis (strain 168).